The following is a 114-amino-acid chain: UPF0102 protein jhp_0762 (114 aa).

Belongs to the UPF0102 family.

This chain is UPF0102 protein jhp_0762, found in Helicobacter pylori (strain J99 / ATCC 700824) (Campylobacter pylori J99).